We begin with the raw amino-acid sequence, 346 residues long: Glucose-6-phosphatase 3 (346 aa).

Residues 1–24 are Lumenal-facing; sequence MESTLGAGIVIAEALQNQLAWLEN. A helical transmembrane segment spans residues 25–45; the sequence is VWLWITFLGDPKILFLFYFPA. The Cytoplasmic portion of the chain corresponds to 46-54; that stretch reads AYYASRRVG. Residues 55 to 75 traverse the membrane as a helical segment; the sequence is IAVLWISLITEWLNLIFKWFL. Over 76–114 the chain is Lumenal; sequence FGDRPFWWVHESGYYSQAPAQVHQFPSSCETGPGSPSGH. Arg-79 lines the substrate pocket. His-114 functions as the Proton donor in the catalytic mechanism. Residues 115 to 135 form a helical membrane-spanning segment; that stretch reads CMITGAALWPIMTALSSQVAT. Residues 136-146 lie on the Cytoplasmic side of the membrane; that stretch reads RARSRWVRVMP. Residues 147 to 164 form a helical membrane-spanning segment; sequence SLAYCTFLLAVGLSRIFI. Arg-161 provides a ligand contact to substrate. At 165–169 the chain is on the lumenal side; the sequence is LAHFP. His-167 (nucleophile) is an active-site residue. The helical transmembrane segment at 170 to 186 threads the bilayer; it reads HQVLAGLITGAVLGWLM. At 187 to 197 the chain is on the cytoplasmic side; that stretch reads TPRVPMERELS. Residues 198–218 form a helical membrane-spanning segment; sequence FYGLTALALMLGTSLIYWTLF. The Lumenal segment spans residues 219–254; the sequence is TLGLDLSWSISLAFKWCERPEWIHVDSRPFASLSRD. A helical transmembrane segment spans residues 255-273; that stretch reads SGAALGLGIALHSPCYAQV. The Cytoplasmic segment spans residues 274-283; it reads RRAQLGNGQK. The helical transmembrane segment at 284-304 threads the bilayer; the sequence is IACLVLAMGLLGPLDWLGHPP. Residues 305-307 lie on the Lumenal side of the membrane; it reads QIS. The helical transmembrane segment at 308-328 threads the bilayer; that stretch reads LFYIFNFLKYTLWPCLVLALV. Over 329 to 346 the chain is Cytoplasmic; that stretch reads PWAVHMFSAQEAPPIHSS.

Belongs to the glucose-6-phosphatase family. As to expression, ubiquitously expressed. Highly expressed in skeletal muscle, at intermediate levels in heart, brain, placenta, kidney, colon, thymus, spleen and pancreas. Also detected in testis, prostate, ovary, liver, lung, small intestine and peripheral blood lymphocytes.

It is found in the endoplasmic reticulum membrane. The enzyme catalyses D-glucose 6-phosphate + H2O = D-glucose + phosphate. It participates in carbohydrate biosynthesis; gluconeogenesis. With respect to regulation, inhibited by vanadate. In terms of biological role, hydrolyzes glucose-6-phosphate to glucose in the endoplasmic reticulum. May form with the glucose-6-phosphate transporter (SLC37A4/G6PT) a ubiquitously expressed complex responsible for glucose production through glycogenolysis and gluconeogenesis. Probably required for normal neutrophil function. The sequence is that of Glucose-6-phosphatase 3 (G6PC3) from Homo sapiens (Human).